A 191-amino-acid chain; its full sequence is Fe/S biogenesis protein NfuA (191 aa).

[4Fe-4S] cluster is bound by residues Cys-149 and Cys-152.

Belongs to the NfuA family. Homodimer. Requires [4Fe-4S] cluster as cofactor.

In terms of biological role, involved in iron-sulfur cluster biogenesis. Binds a 4Fe-4S cluster, can transfer this cluster to apoproteins, and thereby intervenes in the maturation of Fe/S proteins. Could also act as a scaffold/chaperone for damaged Fe/S proteins. This Klebsiella pneumoniae (strain 342) protein is Fe/S biogenesis protein NfuA.